The sequence spans 502 residues: Probable cytosol aminopeptidase (502 aa).

Lys269 and Asp274 together coordinate Mn(2+). The active site involves Lys281. Mn(2+) is bound by residues Asp292, Asp351, and Glu353. Arg355 is a catalytic residue.

The protein belongs to the peptidase M17 family. Mn(2+) is required as a cofactor.

Its subcellular location is the cytoplasm. The enzyme catalyses Release of an N-terminal amino acid, Xaa-|-Yaa-, in which Xaa is preferably Leu, but may be other amino acids including Pro although not Arg or Lys, and Yaa may be Pro. Amino acid amides and methyl esters are also readily hydrolyzed, but rates on arylamides are exceedingly low.. The catalysed reaction is Release of an N-terminal amino acid, preferentially leucine, but not glutamic or aspartic acids.. Presumably involved in the processing and regular turnover of intracellular proteins. Catalyzes the removal of unsubstituted N-terminal amino acids from various peptides. The chain is Probable cytosol aminopeptidase from Vibrio vulnificus (strain CMCP6).